Consider the following 132-residue polypeptide: Profilin-1 (132 aa).

This sequence belongs to the profilin family. Occurs in many kinds of cells as a complex with monomeric actin in a 1:1 ratio. As to expression, expressed in the nerve ring during late embryonic stages. In adults, expression is seen in the neurons, vulva and somatic gonad.

Its subcellular location is the cytoplasm. The protein localises to the cytoskeleton. Binds to actin and affects the structure of the cytoskeleton. At high concentrations, profilin prevents the polymerization of actin, whereas it enhances it at low concentrations. By binding to PIP2, it inhibits the formation of IP3 and DG. Also binds to poly(L-proline) and phosphatidylinositol 4,5-bisphosphate micelles. The polypeptide is Profilin-1 (pfn-1) (Caenorhabditis elegans).